A 345-amino-acid polypeptide reads, in one-letter code: Arginine N-succinyltransferase (345 aa).

Leucine 125 serves as a coordination point for succinyl-CoA. The Proton donor role is filled by histidine 229.

It belongs to the arginine N-succinyltransferase family.

The catalysed reaction is succinyl-CoA + L-arginine = N(2)-succinyl-L-arginine + CoA + H(+). The protein operates within amino-acid degradation; L-arginine degradation via AST pathway; L-glutamate and succinate from L-arginine: step 1/5. In terms of biological role, catalyzes the transfer of succinyl-CoA to arginine to produce N(2)-succinylarginine. The chain is Arginine N-succinyltransferase from Yersinia enterocolitica serotype O:8 / biotype 1B (strain NCTC 13174 / 8081).